The primary structure comprises 200 residues: dTTP/UTP pyrophosphatase (200 aa).

D73 (proton acceptor) is an active-site residue.

It belongs to the Maf family. YhdE subfamily. The cofactor is a divalent metal cation.

Its subcellular location is the cytoplasm. The enzyme catalyses dTTP + H2O = dTMP + diphosphate + H(+). The catalysed reaction is UTP + H2O = UMP + diphosphate + H(+). Nucleoside triphosphate pyrophosphatase that hydrolyzes dTTP and UTP. May have a dual role in cell division arrest and in preventing the incorporation of modified nucleotides into cellular nucleic acids. The polypeptide is dTTP/UTP pyrophosphatase (Chromohalobacter salexigens (strain ATCC BAA-138 / DSM 3043 / CIP 106854 / NCIMB 13768 / 1H11)).